A 779-amino-acid polypeptide reads, in one-letter code: Transcription factor SPT20 homolog (779 aa).

Ser-296 carries the post-translational modification Phosphoserine. Disordered regions lie at residues Asp-373–Asn-392 and Pro-420–Lys-507. A compositionally biased stretch (low complexity) spans Ser-424 to Ser-437. A compositionally biased stretch (polar residues) spans Thr-445–Val-454. Low complexity predominate over residues Ser-470 to Asn-479. Residue Thr-494 is modified to Phosphothreonine. A phosphoserine mark is found at Ser-519 and Ser-524. Disordered regions lie at residues Gln-641–Leu-677 and Leu-755–Phe-779. Residues Leu-755–Arg-771 are compositionally biased toward basic residues.

This sequence belongs to the SPT20 family. Interacts with MAPK14. Interacts with ATG9A. In terms of tissue distribution, highly expressed in testis, moderately in brain and pituitary gland. Expressed in several fetal tissues, including lung, brain, thymus and kidney. Expression is down-regulated in malignant prostate tissues.

It localises to the nucleus. Required for MAP kinase p38 (MAPK11, MAPK12, MAPK13 and/or MAPK14) activation during gastrulation. Required for down-regulation of E-cadherin during gastrulation by regulating E-cadherin protein level downstream from NCK-interacting kinase (NIK) and independently of the regulation of transcription by FGF signaling and Snail. Required for starvation-induced ATG9A trafficking during autophagy. The sequence is that of Transcription factor SPT20 homolog (SUPT20H) from Homo sapiens (Human).